The chain runs to 246 residues: 3-deoxy-manno-octulosonate cytidylyltransferase (246 aa).

Belongs to the KdsB family.

Its subcellular location is the cytoplasm. It carries out the reaction 3-deoxy-alpha-D-manno-oct-2-ulosonate + CTP = CMP-3-deoxy-beta-D-manno-octulosonate + diphosphate. It functions in the pathway nucleotide-sugar biosynthesis; CMP-3-deoxy-D-manno-octulosonate biosynthesis; CMP-3-deoxy-D-manno-octulosonate from 3-deoxy-D-manno-octulosonate and CTP: step 1/1. The protein operates within bacterial outer membrane biogenesis; lipopolysaccharide biosynthesis. Activates KDO (a required 8-carbon sugar) for incorporation into bacterial lipopolysaccharide in Gram-negative bacteria. This is 3-deoxy-manno-octulosonate cytidylyltransferase from Myxococcus xanthus (strain DK1622).